The primary structure comprises 296 residues: Nucleotide-binding protein M28_Spy0517 (296 aa).

Position 13–20 (G13–T20) interacts with ATP. Position 63-66 (D63–S66) interacts with GTP.

This sequence belongs to the RapZ-like family.

Its function is as follows. Displays ATPase and GTPase activities. This is Nucleotide-binding protein M28_Spy0517 from Streptococcus pyogenes serotype M28 (strain MGAS6180).